The primary structure comprises 208 residues: Large ribosomal subunit protein uL3 (208 aa).

A disordered region spans residues 123–146; the sequence is RHGQSRGPMAHGSRYHRRPGSMGP.

It belongs to the universal ribosomal protein uL3 family. Part of the 50S ribosomal subunit. Forms a cluster with proteins L14 and L19.

One of the primary rRNA binding proteins, it binds directly near the 3'-end of the 23S rRNA, where it nucleates assembly of the 50S subunit. This is Large ribosomal subunit protein uL3 from Streptococcus thermophilus (strain CNRZ 1066).